We begin with the raw amino-acid sequence, 757 residues long: RNA-directed RNA polymerase catalytic subunit (757 aa).

The interval S50–Q79 is disordered. Over residues W55–P64 the composition is skewed to polar residues. Short sequence motifs (nuclear localization signal) lie at residues R187 to M195 and R203 to S216. The interval R249–E256 is promoter-binding site. The 198-residue stretch at V286–Y483 folds into the RdRp catalytic domain.

It belongs to the influenza viruses polymerase PB1 family. As to quaternary structure, influenza RNA polymerase is composed of three subunits: PB1, PB2 and PA. Interacts (via N-terminus) with PA (via C-terminus). Interacts (via C-terminus) with PB2 (via N-terminus); this interaction is essential for transcription initiation. In terms of processing, phosphorylated by host PRKCA.

Its subcellular location is the host nucleus. It is found in the host cytoplasm. It carries out the reaction RNA(n) + a ribonucleoside 5'-triphosphate = RNA(n+1) + diphosphate. RNA-dependent RNA polymerase which is responsible for replication and transcription of virus RNA segments. The transcription of viral mRNAs occurs by a unique mechanism called cap-snatching. 5' methylated caps of cellular mRNAs are cleaved after 10-13 nucleotides by PA. In turn, these short capped RNAs are used as primers by PB1 for transcription of viral mRNAs. During virus replication, PB1 initiates RNA synthesis and copy vRNA into complementary RNA (cRNA) which in turn serves as a template for the production of more vRNAs. This Influenza A virus (strain A/Dunedin/4/1973 H3N2) protein is RNA-directed RNA polymerase catalytic subunit.